Consider the following 80-residue polypeptide: Protein FAM229B (80 aa).

The disordered stretch occupies residues Met1–Arg45. The segment covering Glu15–Ser32 has biased composition (low complexity). Residues Cys33–Arg42 are compositionally biased toward polar residues.

It belongs to the FAM229 family.

This Rattus norvegicus (Rat) protein is Protein FAM229B (Fam229b).